A 24-amino-acid polypeptide reads, in one-letter code: Coenzyme PQQ synthesis protein A (24 aa).

A cross-link (pyrroloquinoline quinone (Glu-Tyr)) is located at residues 16-20 (EVTMY).

It belongs to the PqqA family.

The protein operates within cofactor biosynthesis; pyrroloquinoline quinone biosynthesis. Its function is as follows. Required for coenzyme pyrroloquinoline quinone (PQQ) biosynthesis. PQQ is probably formed by cross-linking a specific glutamate to a specific tyrosine residue and excising these residues from the peptide. This chain is Coenzyme PQQ synthesis protein A, found in Acinetobacter baumannii (strain SDF).